The chain runs to 102 residues: NADH-quinone oxidoreductase subunit K (102 aa).

The next 3 helical transmembrane spans lie at 5–25 (LSHY…GIFL), 31–51 (IVIL…MVAF), and 65–85 (LFIL…LVVF).

It belongs to the complex I subunit 4L family. In terms of assembly, NDH-1 is composed of 14 different subunits. Subunits NuoA, H, J, K, L, M, N constitute the membrane sector of the complex.

Its subcellular location is the cell inner membrane. The catalysed reaction is a quinone + NADH + 5 H(+)(in) = a quinol + NAD(+) + 4 H(+)(out). Functionally, NDH-1 shuttles electrons from NADH, via FMN and iron-sulfur (Fe-S) centers, to quinones in the respiratory chain. The immediate electron acceptor for the enzyme in this species is believed to be ubiquinone. Couples the redox reaction to proton translocation (for every two electrons transferred, four hydrogen ions are translocated across the cytoplasmic membrane), and thus conserves the redox energy in a proton gradient. This is NADH-quinone oxidoreductase subunit K from Rhizobium leguminosarum bv. trifolii (strain WSM2304).